We begin with the raw amino-acid sequence, 355 residues long: MRILNVSLLVLASSLVAFVECGRDFYKILGVAKNANANQIKKAYRKLAKELHPDRNQDDEMANEKFQDLSSAYEVLSDKEKRAMYDRHGEEGVAKMGGGGGGGHDPFSSFFGDFFGGGGGHGGEEGTPKGADVTIDLFVTLEEVYNGHFVEIKRKKAVYKQTSGTRQCNCRHEMRTEQMGQGRFQMFQVKVCDECPNVKLVQENKVLEVEVEVGADNGHQQIFHGEGEPHIEGDPGDLKFKIRIQKHPRFERKGDDLYTNVTISLQDALNGFEMEIQHLDGHIVKVQRDKVTWPGARLRKKDEGMPSLEDNNKKGMLVVTFDVEFPKTELSDEQKAQIIEILQQNTVKPKAYNGL.

An N-terminal signal peptide occupies residues 1 to 21 (MRILNVSLLVLASSLVAFVEC). One can recognise a J domain in the interval 24–89 (DFYKILGVAK…EKRAMYDRHG (66 aa)).

The polypeptide is DnaJ homolog dnj-20 (Caenorhabditis elegans).